The following is a 524-amino-acid chain: Ribonuclease Y (524 aa).

A helical membrane pass occupies residues 7–27 (LGGLLTGIVIAIIASIIASVI). The KH domain occupies 214 to 299 (TVSVVPLPND…EMVEKARKEV (86 aa)). Residues 340–433 (VLSHSIEVAR…VQAADSISAA (94 aa)) enclose the HD domain.

The protein belongs to the RNase Y family.

Its subcellular location is the cell membrane. In terms of biological role, endoribonuclease that initiates mRNA decay. In Acetivibrio thermocellus (strain ATCC 27405 / DSM 1237 / JCM 9322 / NBRC 103400 / NCIMB 10682 / NRRL B-4536 / VPI 7372) (Clostridium thermocellum), this protein is Ribonuclease Y.